Reading from the N-terminus, the 334-residue chain is Transmembrane protein 41 homolog (334 aa).

Asn43 carries N-linked (GlcNAc...) asparagine glycosylation. The disordered stretch occupies residues 47 to 79; sequence KNKNNNIDNKKNSNNNNNNNNNNNNKNSISNNN. Asn83 carries N-linked (GlcNAc...) asparagine glycosylation. Helical transmembrane passes span 97-117, 156-176, 192-214, 246-266, 269-289, and 305-325; these read LPLW…VFLF, FIVI…SIPG, VGFP…ISYY, IVFL…ASPL, VPIH…TFLA, and IFDL…ILPT.

Belongs to the TMEM41 family.

It localises to the membrane. This is Transmembrane protein 41 homolog from Dictyostelium discoideum (Social amoeba).